Consider the following 493-residue polypeptide: Cysteine--tRNA ligase (493 aa).

Zn(2+) is bound at residue cysteine 29. A 'HIGH' region motif is present at residues alanine 31–histidine 41. Positions 214, 239, and 243 each coordinate Zn(2+). A 'KMSKS' region motif is present at residues lysine 270–serine 274. Lysine 273 contributes to the ATP binding site.

This sequence belongs to the class-I aminoacyl-tRNA synthetase family. In terms of assembly, monomer. Zn(2+) is required as a cofactor.

Its subcellular location is the cytoplasm. It catalyses the reaction tRNA(Cys) + L-cysteine + ATP = L-cysteinyl-tRNA(Cys) + AMP + diphosphate. This chain is Cysteine--tRNA ligase, found in Renibacterium salmoninarum (strain ATCC 33209 / DSM 20767 / JCM 11484 / NBRC 15589 / NCIMB 2235).